Consider the following 557-residue polypeptide: Formate--tetrahydrofolate ligase 2 (557 aa).

Residue 66–73 coordinates ATP; it reads TPAGEGKT.

It belongs to the formate--tetrahydrofolate ligase family.

The enzyme catalyses (6S)-5,6,7,8-tetrahydrofolate + formate + ATP = (6R)-10-formyltetrahydrofolate + ADP + phosphate. The protein operates within one-carbon metabolism; tetrahydrofolate interconversion. This Streptococcus pyogenes serotype M6 (strain ATCC BAA-946 / MGAS10394) protein is Formate--tetrahydrofolate ligase 2.